A 280-amino-acid polypeptide reads, in one-letter code: uncharacterized protein (280 aa).

This is an uncharacterized protein from Acanthamoeba polyphaga (Amoeba).